Reading from the N-terminus, the 354-residue chain is Rhodopsin (354 aa).

Over 1 to 36 the chain is Extracellular; sequence MNGTEGPYFYVPMVNTTGIVRSPYEYPQYYLVSPAA. N-linked (GlcNAc...) asparagine glycosylation is found at asparagine 2 and asparagine 15. The chain crosses the membrane as a helical span at residues 37–61; that stretch reads YACLGAYMFFLILVGFPINFLTLYV. Residues 62–73 are Cytoplasmic-facing; it reads TIEHKKLRTPLN. A helical transmembrane segment spans residues 74 to 96; that stretch reads YILLNLAVADLFMVFGGFTTTIY. Residues 97–110 lie on the Extracellular side of the membrane; sequence TSMHGYFVLGRLGC. Cysteine 110 and cysteine 187 form a disulfide bridge. A helical transmembrane segment spans residues 111 to 133; that stretch reads NLEGYFATLGGEIGLWSLVVLAV. The short motif at 134 to 136 is the 'Ionic lock' involved in activated form stabilization element; the sequence is ERW. Residues 134-152 are Cytoplasmic-facing; it reads ERWLVVCKPISNFRFSENH. Residues 153–173 traverse the membrane as a helical segment; the sequence is AIMGLVFTWIMANSCAAPPLL. Residues 174–202 lie on the Extracellular side of the membrane; that stretch reads GWSRYIPEGMQCSCGVDYYTRAEGFNNES. Residues 203-224 traverse the membrane as a helical segment; the sequence is FVIYMFICHFCIPLIVVFFCYG. At 225–252 the chain is on the cytoplasmic side; it reads RLLCAVKEAAAAQQESETTQRAEREVTR. A helical membrane pass occupies residues 253–274; that stretch reads MVVIMVIGFLVCWIPYASVAWY. Residues 275–286 are Extracellular-facing; it reads IFTHQGSEFGPL. A helical membrane pass occupies residues 287-308; it reads FMTVPAFFAKSASIYNPLIYIC. The residue at position 296 (lysine 296) is an N6-(retinylidene)lysine. Residues 309–354 are Cytoplasmic-facing; sequence MNKQFRHCMITTLCCGKNPFEEEEGASTTASKTEASSVSSSSVSPA. S-palmitoyl cysteine attachment occurs at residues cysteine 322 and cysteine 323. The interval 333–354 is disordered; it reads GASTTASKTEASSVSSSSVSPA. Over residues 334-354 the composition is skewed to low complexity; that stretch reads ASTTASKTEASSVSSSSVSPA.

Belongs to the G-protein coupled receptor 1 family. Opsin subfamily. Post-translationally, phosphorylated on some or all of the serine and threonine residues present in the C-terminal region. In terms of processing, contains one covalently linked retinal chromophore.

Its subcellular location is the membrane. It is found in the cell projection. It localises to the cilium. The protein resides in the photoreceptor outer segment. Its function is as follows. Photoreceptor required for image-forming vision at low light intensity. While most salt water fish species use retinal as chromophore, most freshwater fish use 3-dehydroretinal, or a mixture of retinal and 3-dehydroretinal. Light-induced isomerization of 11-cis to all-trans retinal triggers a conformational change that activates signaling via G-proteins. Subsequent receptor phosphorylation mediates displacement of the bound G-protein alpha subunit by arrestin and terminates signaling. The polypeptide is Rhodopsin (rho) (Poecilia reticulata (Guppy)).